The following is a 180-amino-acid chain: Signal peptidase complex subunit 3 (180 aa).

Residues 1-12 lie on the Cytoplasmic side of the membrane; that stretch reads MHNLLSRANSLL. Residues 13–33 form a helical; Signal-anchor for type II membrane protein membrane-spanning segment; it reads AFTLWVMAAVTAACFLSTVFL. The Lumenal segment spans residues 34–180; that stretch reads DYTVSNHLEV…PTTYTTTRRS (147 aa). Asn-141 carries N-linked (GlcNAc...) asparagine glycosylation.

Belongs to the SPCS3 family. In terms of assembly, component of the signal peptidase complex (SPC) composed of a catalytic subunit sec-11 and three accessory subunits spcs-1, spcs-2 and spcs-3. The complex induces a local thinning of the ER membrane which is used to measure the length of the signal peptide (SP) h-region of protein substrates. This ensures the selectivity of the complex towards h-regions shorter than 18-20 amino acids.

Its subcellular location is the endoplasmic reticulum membrane. In terms of biological role, essential component of the signal peptidase complex (SPC) which catalyzes the cleavage of N-terminal signal sequences from nascent proteins as they are translocated into the lumen of the endoplasmic reticulum. Essential for the SPC catalytic activity, possibly by stabilizing and positioning the active center of the complex close to the lumenal surface. This chain is Signal peptidase complex subunit 3, found in Caenorhabditis briggsae.